The primary structure comprises 444 residues: Platelet-activating factor acetylhydrolase (444 aa).

The signal sequence occupies residues 1-21 (MLPSKLHALFCLCTCLALVYP). Residues Asn60 and Asn200 are each glycosylated (N-linked (GlcNAc...) asparagine). Catalysis depends on Ser274, which acts as the Nucleophile. Residues Asp297 and His352 each act as charge relay system in the active site. N-linked (GlcNAc...) asparagine glycans are attached at residues Asn424 and Asn434.

Belongs to the AB hydrolase superfamily. Lipase family. In terms of processing, N-glycosylated. Plasma.

The protein resides in the secreted. It localises to the extracellular space. The catalysed reaction is a 1-O-alkyl-2-acetyl-sn-glycero-3-phosphocholine + H2O = a 1-O-alkyl-sn-glycero-3-phosphocholine + acetate + H(+). It catalyses the reaction 1-O-decyl-2-acetyl-sn-glycero-3-phosphocholine + H2O = 1-O-decyl-sn-glycero-3-phosphocholine + acetate + H(+). The enzyme catalyses 1-O-dodecyl-2-acetyl-sn-glycero-3-phosphocholine + H2O = 1-O-dodecyl-sn-glycero-3-phosphocholine + acetate + H(+). It carries out the reaction 1-O-tetradecyl-2-acetyl-sn-glycero-3-phosphocholine + H2O = 1-O-tetradecyl-sn-glycero-3-phosphocholine + acetate + H(+). The catalysed reaction is 1-O-hexadecyl-2-acetyl-sn-glycero-3-phosphocholine + H2O = 1-O-hexadecyl-sn-glycero-3-phosphocholine + acetate + H(+). It catalyses the reaction 1-O-octadecyl-2-acetyl-sn-glycero-3-phosphocholine + H2O = 1-O-octadecyl-sn-glycero-3-phosphocholine + acetate + H(+). The enzyme catalyses 1-hexadecanoyl-2-acetyl-sn-glycero-3-phosphocholine + H2O = 1-hexadecanoyl-sn-glycero-3-phosphocholine + acetate + H(+). It carries out the reaction 1-hexadecanoyl-2-propionyl-sn-glycero-3-phosphocholine + H2O = propanoate + 1-hexadecanoyl-sn-glycero-3-phosphocholine + H(+). The catalysed reaction is 1-hexadecanoyl-2-butanoyl-sn-glycero-3-phosphocholine + H2O = butanoate + 1-hexadecanoyl-sn-glycero-3-phosphocholine + H(+). It catalyses the reaction 1-hexadecanoyl-2-pentanoyl-sn-glycero-3-phosphocholine + H2O = pentanoate + 1-hexadecanoyl-sn-glycero-3-phosphocholine + H(+). The enzyme catalyses 1-hexadecanoyl-2-glutaroyl-sn-glycero-3-phosphocholine + H2O = glutarate + 1-hexadecanoyl-sn-glycero-3-phosphocholine + H(+). It carries out the reaction 1-hexadecanoyl-2-(5-oxopentanoyl)-sn-glycero-3-phosphocholine + H2O = 5-oxopentanoate + 1-hexadecanoyl-sn-glycero-3-phosphocholine + H(+). The catalysed reaction is 1-hexadecanoyl-2-(9-oxononanoyl)-sn-glycero-3-phosphocholine + H2O = 9-oxononanoate + 1-hexadecanoyl-sn-glycero-3-phosphocholine + H(+). It catalyses the reaction 1-hexadecanoyl-2-[9-hydroperoxy-(10E-octadecenoyl)]-sn-glycero-3-phosphocholine + H2O = 9-hydroperoxy-10E-octadecenoate + 1-hexadecanoyl-sn-glycero-3-phosphocholine + H(+). The enzyme catalyses 1-hexadecanoyl-2-(10-hydroperoxy-8E-octadecenoyl)-sn-glycero-3-phosphocholine + H2O = 10-hydroperoxy-(8E)-octadecenoate + 1-hexadecanoyl-sn-glycero-3-phosphocholine + H(+). Its function is as follows. Lipoprotein-associated calcium-independent phospholipase A2 involved in phospholipid catabolism during inflammatory and oxidative stress response. At the lipid-aqueous interface, hydrolyzes the ester bond of fatty acyl group attached at sn-2 position of phospholipids (phospholipase A2 activity). Specifically targets phospholipids with a short-chain fatty acyl group at sn-2 position. Can hydrolyze phospholipids with long fatty acyl chains, only if they carry oxidized functional groups. Hydrolyzes and inactivates platelet-activating factor (PAF, 1-O-alkyl-2-acetyl-sn-glycero-3-phosphocholine), a potent pro-inflammatory signaling lipid that acts through PTAFR on various innate immune cells. Hydrolyzes oxidatively truncated phospholipids carrying an aldehyde group at omega position, preventing their accumulation in low-density lipoprotein (LDL) particles and uncontrolled pro-inflammatory effects. As part of high-density lipoprotein (HDL) particles, can hydrolyze phospholipids having long-chain fatty acyl hydroperoxides at sn-2 position and protect against potential accumulation of these oxylipins in the vascular wall. Catalyzes the release from membrane phospholipids of F2-isoprostanes, lipid biomarkers of cellular oxidative damage. In Bos taurus (Bovine), this protein is Platelet-activating factor acetylhydrolase (PLA2G7).